Reading from the N-terminus, the 666-residue chain is Threonine--tRNA ligase (666 aa).

Residues 7-70 (QQVTLTVTLP…TADCTAEIIT (64 aa)) form the TGS domain. Residues 253–555 (DHRKLGTELE…LIEHTAGNFP (303 aa)) are catalytic. Zn(2+) contacts are provided by cysteine 351, histidine 402, and histidine 532.

This sequence belongs to the class-II aminoacyl-tRNA synthetase family. In terms of assembly, homodimer. Zn(2+) is required as a cofactor.

Its subcellular location is the cytoplasm. The enzyme catalyses tRNA(Thr) + L-threonine + ATP = L-threonyl-tRNA(Thr) + AMP + diphosphate + H(+). Catalyzes the attachment of threonine to tRNA(Thr) in a two-step reaction: L-threonine is first activated by ATP to form Thr-AMP and then transferred to the acceptor end of tRNA(Thr). Also edits incorrectly charged L-seryl-tRNA(Thr). In Chlorobium phaeovibrioides (strain DSM 265 / 1930) (Prosthecochloris vibrioformis (strain DSM 265)), this protein is Threonine--tRNA ligase.